Here is a 313-residue protein sequence, read N- to C-terminus: Putative S-adenosyl-L-methionine-dependent methyltransferase MMAR_0955 (313 aa).

S-adenosyl-L-methionine is bound by residues D132 and 161–162 (DL).

It belongs to the UPF0677 family.

In terms of biological role, exhibits S-adenosyl-L-methionine-dependent methyltransferase activity. The chain is Putative S-adenosyl-L-methionine-dependent methyltransferase MMAR_0955 from Mycobacterium marinum (strain ATCC BAA-535 / M).